A 321-amino-acid polypeptide reads, in one-letter code: Thioredoxin reductase (321 aa).

FAD is bound by residues 11-14 (SGPA), 40-41 (TA), Gln-45, Asn-54, Cys-145, Asp-288, and 295-297 (RQA). An intrachain disulfide couples Cys-142 to Cys-145.

This sequence belongs to the class-II pyridine nucleotide-disulfide oxidoreductase family. As to quaternary structure, homodimer. Requires FAD as cofactor.

Its subcellular location is the cytoplasm. It catalyses the reaction [thioredoxin]-dithiol + NADP(+) = [thioredoxin]-disulfide + NADPH + H(+). The sequence is that of Thioredoxin reductase (TRR1) from Debaryomyces hansenii (strain ATCC 36239 / CBS 767 / BCRC 21394 / JCM 1990 / NBRC 0083 / IGC 2968) (Yeast).